Reading from the N-terminus, the 303-residue chain is Eukaryotic translation initiation factor 3 subunit G (303 aa).

The tract at residues methionine 1–aspartate 38 is disordered. One can recognise an RRM domain in the interval alanine 223 to lysine 301.

This sequence belongs to the eIF-3 subunit G family. In terms of assembly, component of the eukaryotic translation initiation factor 3 (eIF-3) complex.

It is found in the cytoplasm. RNA-binding component of the eukaryotic translation initiation factor 3 (eIF-3) complex, which is involved in protein synthesis of a specialized repertoire of mRNAs and, together with other initiation factors, stimulates binding of mRNA and methionyl-tRNAi to the 40S ribosome. The eIF-3 complex specifically targets and initiates translation of a subset of mRNAs involved in cell proliferation. This subunit can bind 18S rRNA. The chain is Eukaryotic translation initiation factor 3 subunit G from Chaetomium globosum (strain ATCC 6205 / CBS 148.51 / DSM 1962 / NBRC 6347 / NRRL 1970) (Soil fungus).